A 513-amino-acid polypeptide reads, in one-letter code: Ribonuclease Y (513 aa).

Residues 6 to 26 (YIIIAVVIIIICVILGLYVVD) traverse the membrane as a helical segment. The 86-residue stretch at 203–288 (TVHVVNLPND…EMVEKAKKEV (86 aa)) folds into the KH domain. The HD domain maps to 329-422 (VLKHSIEVSH…VQAADAISAA (94 aa)).

The protein belongs to the RNase Y family.

It localises to the cell membrane. In terms of biological role, endoribonuclease that initiates mRNA decay. The protein is Ribonuclease Y of Clostridium botulinum (strain Loch Maree / Type A3).